The chain runs to 90 residues: Small ribosomal subunit protein bS16 (90 aa).

This sequence belongs to the bacterial ribosomal protein bS16 family.

This Lactobacillus delbrueckii subsp. bulgaricus (strain ATCC 11842 / DSM 20081 / BCRC 10696 / JCM 1002 / NBRC 13953 / NCIMB 11778 / NCTC 12712 / WDCM 00102 / Lb 14) protein is Small ribosomal subunit protein bS16.